The primary structure comprises 101 residues: Early E3A 11.6 kDa glycoprotein (101 aa).

The N-linked (GlcNAc...) asparagine; by host glycan is linked to Asn14. A helical membrane pass occupies residues 41 to 62 (MWWFSIALMFVCLIIMWLICCL).

It belongs to the adenoviridae E3A-1 family. In terms of processing, N-glycosylated and probably also O-glycosylated.

It localises to the host nucleus membrane. The chain is Early E3A 11.6 kDa glycoprotein from Human adenovirus C serotype 6 (HAdV-6).